Reading from the N-terminus, the 453-residue chain is Phosphoglucosamine mutase (453 aa).

Ser-105 serves as the catalytic Phosphoserine intermediate. Mg(2+) contacts are provided by Ser-105, Asp-244, Asp-246, and Asp-248. Residue Ser-105 is modified to Phosphoserine.

It belongs to the phosphohexose mutase family. Mg(2+) serves as cofactor. Activated by phosphorylation.

The catalysed reaction is alpha-D-glucosamine 1-phosphate = D-glucosamine 6-phosphate. In terms of biological role, catalyzes the conversion of glucosamine-6-phosphate to glucosamine-1-phosphate. The polypeptide is Phosphoglucosamine mutase (Blochmanniella pennsylvanica (strain BPEN)).